Reading from the N-terminus, the 272-residue chain is Shikimate dehydrogenase (NADP(+)) (272 aa).

Residues 14–16 (SKS) and threonine 61 contribute to the shikimate site. Lysine 65 functions as the Proton acceptor in the catalytic mechanism. Glutamate 77 lines the NADP(+) pocket. The shikimate site is built by asparagine 86 and aspartate 102. NADP(+)-binding positions include 126 to 130 (GAGGA), 149 to 154 (NRTVSR), and methionine 213. Residue tyrosine 215 participates in shikimate binding. Residue glycine 237 coordinates NADP(+).

Belongs to the shikimate dehydrogenase family. Homodimer.

It catalyses the reaction shikimate + NADP(+) = 3-dehydroshikimate + NADPH + H(+). It functions in the pathway metabolic intermediate biosynthesis; chorismate biosynthesis; chorismate from D-erythrose 4-phosphate and phosphoenolpyruvate: step 4/7. Functionally, involved in the biosynthesis of the chorismate, which leads to the biosynthesis of aromatic amino acids. Catalyzes the reversible NADPH linked reduction of 3-dehydroshikimate (DHSA) to yield shikimate (SA). The chain is Shikimate dehydrogenase (NADP(+)) from Escherichia coli O139:H28 (strain E24377A / ETEC).